The chain runs to 163 residues: Putative protein CASTOR3P (163 aa).

This sequence belongs to the GATS family.

The chain is Putative protein CASTOR3P from Homo sapiens (Human).